The chain runs to 678 residues: uncharacterized protein (678 aa).

This is an uncharacterized protein from Ostreid herpesvirus 1 (isolate France) (OsHV-1).